A 151-amino-acid polypeptide reads, in one-letter code: Protein A151R (151 aa).

4 residues coordinate Zn(2+): His102, Cys109, Cys132, and Cys135. The Thioredoxin WCTKC motif signature appears at 131-135 (WCTKC).

Belongs to the asfivirus A151R family. As to quaternary structure, monomer. Homodimer. Interacts with protein B119L. Interacts with membrane protein E248R. The cofactor is Zn(2+).

Its function is as follows. May participate in a redox cascade for the formation of disulfide bonds in viral proteins. The protein is Protein A151R of African swine fever virus (strain Badajoz 1971 Vero-adapted) (Ba71V).